We begin with the raw amino-acid sequence, 79 residues long: Sulfur carrier protein TusA (79 aa).

Residue Cys-17 is the Cysteine persulfide intermediate of the active site.

It belongs to the sulfur carrier protein TusA family.

It localises to the cytoplasm. Sulfur carrier protein which probably makes part of a sulfur-relay system. In Mannheimia succiniciproducens (strain KCTC 0769BP / MBEL55E), this protein is Sulfur carrier protein TusA.